Consider the following 644-residue polypeptide: Acetolactate synthase 1, chloroplastic (644 aa).

The N-terminal 43 residues, 1 to 43, are a transit peptide targeting the chloroplast; sequence MATTAAAAAAALSAAATAKTGRKNHQRHHVLPARGRVGAAAVR. The tract at residues 47–67 is disordered; that stretch reads VSPVTPPSPAPPATPLRPWGP. Residues 50–61 show a composition bias toward pro residues; that stretch reads VTPPSPAPPATP. Glu118 is a thiamine diphosphate binding site. A disulfide bridge connects residues Cys138 and Cys284. Residues Arg220, 326 to 347, and 369 to 388 each bind FAD; these read HGTV…FGVR and DIDP…ICAD. Residues 461 to 541 form a thiamine pyrophosphate binding region; that stretch reads QHQMWAAQYY…VKVMVLNNQH (81 aa). Residues Asp512 and Asn539 each contribute to the Mg(2+) site.

Belongs to the TPP enzyme family. Mg(2+) serves as cofactor. Requires thiamine diphosphate as cofactor.

It localises to the plastid. Its subcellular location is the chloroplast. It carries out the reaction 2 pyruvate + H(+) = (2S)-2-acetolactate + CO2. It functions in the pathway amino-acid biosynthesis; L-isoleucine biosynthesis; L-isoleucine from 2-oxobutanoate: step 1/4. Its pathway is amino-acid biosynthesis; L-valine biosynthesis; L-valine from pyruvate: step 1/4. In Oryza sativa subsp. japonica (Rice), this protein is Acetolactate synthase 1, chloroplastic (ALS1).